Here is a 739-residue protein sequence, read N- to C-terminus: Catalase-peroxidase 2 (739 aa).

The first 26 residues, 1-26 (MKKSTIPSMSALTLAMSLAFGGAAIA), serve as a signal peptide directing secretion. The segment at residues 105–227 (WHSAGVYRIF…MGATQMGLIY (123 aa)) is a cross-link (tryptophyl-tyrosyl-methioninium (Trp-Tyr) (with M-253)). His106 acts as the Proton acceptor in catalysis. Residues 227-253 (YVNPEGPNGVPDPLASAKEIRDTFGRM) constitute a cross-link (tryptophyl-tyrosyl-methioninium (Tyr-Met) (with W-105)). His268 contributes to the heme b binding site.

This sequence belongs to the peroxidase family. Peroxidase/catalase subfamily. In terms of assembly, homodimer or homotetramer. It depends on heme b as a cofactor. Formation of the three residue Trp-Tyr-Met cross-link is important for the catalase, but not the peroxidase activity of the enzyme.

It catalyses the reaction H2O2 + AH2 = A + 2 H2O. It carries out the reaction 2 H2O2 = O2 + 2 H2O. In terms of biological role, bifunctional enzyme with both catalase and broad-spectrum peroxidase activity. The sequence is that of Catalase-peroxidase 2 from Shewanella sp. (strain ANA-3).